The chain runs to 136 residues: Invertebrate-type lysozyme (136 aa).

Residues 1–11 (METVSVEEGLD) form the signal peptide. The I-type lysozyme domain occupies 14-130 (PGMVSQKCLL…WELLQKIPGC (117 aa)). 7 disulfide bridges follow: C21-C98, C24-C130, C26-C33, C38-C47, C60-C80, C70-C76, and C94-C112. The active-site Proton donor is the E29. D41 serves as the catalytic Nucleophile. 53–59 (KQPYWID) is a binding site for substrate. The N-linked (GlcNAc...) asparagine glycan is linked to N75. Residues Y84, Y92, 105–107 (HNG), and K119 contribute to the substrate site.

Homodimer in its autoinhibited state. Active as monomer.

It is found in the secreted. It catalyses the reaction Hydrolysis of (1-&gt;4)-beta-linkages between N-acetylmuramic acid and N-acetyl-D-glucosamine residues in a peptidoglycan and between N-acetyl-D-glucosamine residues in chitodextrins.. Its activity is regulated as follows. Chitinase activity is activated by high salt concentrations which cause the release of the monomer from the autoinhibited homodimer. Its function is as follows. Bacteriolytic activity against Gram-positive bacterium M.luteus and thereby probably protects against bacterial infection. Also has chitinase activity. May act as an ispopeptidase, cleaving isopeptide bonds between the side chains of Lys and Gln residues in proteins or in the cross-linking peptide of peptidoglycan in bacterial cell walls. In Ruditapes philippinarum (Japanese carpet shell), this protein is Invertebrate-type lysozyme.